Here is a 268-residue protein sequence, read N- to C-terminus: Tryptophan synthase alpha chain (268 aa).

Residues E49 and D60 each act as proton acceptor in the active site.

This sequence belongs to the TrpA family. In terms of assembly, tetramer of two alpha and two beta chains.

The enzyme catalyses (1S,2R)-1-C-(indol-3-yl)glycerol 3-phosphate + L-serine = D-glyceraldehyde 3-phosphate + L-tryptophan + H2O. It participates in amino-acid biosynthesis; L-tryptophan biosynthesis; L-tryptophan from chorismate: step 5/5. Its function is as follows. The alpha subunit is responsible for the aldol cleavage of indoleglycerol phosphate to indole and glyceraldehyde 3-phosphate. This is Tryptophan synthase alpha chain from Escherichia coli (strain SE11).